A 203-amino-acid chain; its full sequence is Putative 3-methyladenine DNA glycosylase (203 aa).

This sequence belongs to the DNA glycosylase MPG family.

This is Putative 3-methyladenine DNA glycosylase from Clostridium botulinum (strain Loch Maree / Type A3).